The chain runs to 359 residues: MKKTAIALVVAGLAAASVAQAAPQENTFYAGVKAGQGSFHDGINNNGAIKKGLSSSNYGYRRNTFTYGVFGGYQILNQDNFGLAAELGYDDFGRAKLREAGKPKAKHTNHGAYLSLKGSYEVLDGLDVYGKAGVALVRSDYKFYEDANGTRDHKKGRHTARASGLFAVGAEYAVLPELAVRLEYQWLTRVGKYRPQDKPNTAINYNPWIGCINAGISYRFGQGEAPVVAAPEMVSKTFSLNSDVTFAFGKANLKPQAQATLDSVYGEISQVKSRKVAVAGYTNRIGSDAFNVKLSQERADSVANYFVAKGVAADAISATGYGEANPVTGATCDQVKGRKALIACLAPDRRVEIAVNGTK.

The first 21 residues, 1–21 (MKKTAIALVVAGLAAASVAQA), serve as a signal peptide directing secretion. Transmembrane regions (beta stranded) follow at residues 27–37 (TFYAGVKAGQG), 64–75 (TFTYGVFGGYQI), 83–91 (LAAELGYDD), 110–121 (HGAYLSLKGSYE), 126–134 (LDVYGKAGV), 164–173 (GLFAVGAEYA), 178–185 (LAVRLEYQ), and 211–219 (CINAGISYR). One can recognise an OmpA-like domain in the interval 233–359 (MVSKTFSLNS…RVEIAVNGTK (127 aa)). Cys332 and Cys344 are disulfide-bonded.

The protein belongs to the outer membrane OOP (TC 1.B.6) superfamily. OmpA family. As to quaternary structure, monomer and homodimer.

It is found in the cell outer membrane. It localises to the fimbrium. Its function is as follows. Acts as a fimbriae subunit, allowing adhesion to host cells. In terms of biological role, with TolR probably plays a role in maintaining the position of the peptidoglycan cell wall in the periplasm. Acts as a porin with low permeability that allows slow penetration of small solutes; an internal gate slows down solute passage. The chain is Outer membrane protein P5 from Haemophilus influenzae.